We begin with the raw amino-acid sequence, 354 residues long: V-type proton ATPase subunit C (354 aa).

Belongs to the V-ATPase C subunit family. As to quaternary structure, V-ATPase is a heteromultimeric enzyme composed of a peripheral catalytic V1 complex (components A to H) attached to an integral membrane V0 proton pore complex (components: a, c, c', c'' and d).

Its subcellular location is the vacuole membrane. In terms of biological role, subunit of the peripheral V1 complex of vacuolar ATPase. Subunit C is necessary for the assembly of the catalytic sector of the enzyme and is likely to have a specific function in its catalytic activity. V-ATPase is responsible for acidifying a variety of intracellular compartments in eukaryotic cells. This Hordeum vulgare (Barley) protein is V-type proton ATPase subunit C (VATC).